The following is a 636-amino-acid chain: MNPSAPSYPMASLYVGDLHPDVTEAMLYEKFSPAGPILSIRVCRDMITRRSLGYAYVNFQQPADAERALDTMNFDVIKGKPVRIMWSQRDPSLRKSGVGNIFIKNLDKSIDNKALYDTFSAFGNILSCKVVCDENGSKGYGFVHFETQEAAERAIEKMNGMLLNDRKVFVGRFKSRKEREAELGARAKEFTNVYIKNFGEDMDDERLKDLFGKFGPALSVKVMTDESGKSKGFGFVSFERHEDAQKAVDEMNGKELNGKQIYVGRAQKKVERQTELKRKFEQMKQDRITRYQGVNLYVKNLDDGIDDERLRKEFSPFGTITSAKVMMEGGRSKGFGFVCFSSPEEATKAVTEMNGRIVATKPLYVALAQRKEERQAHLTNQYMQRMASVRAVPNPVINPYQPAPPSGYFMAAIPQTQNRAAYYPPSQIAQLRPSPRWTAQGARPHPFQNMPGAIRPAAPRPPFSTMRPASSQVPRVMSTQRVANTSTQTMGPRPAAAAAAATPAVRTVPQYKYAAGVRNPQQHLNAQPQVTMQQPAVHVQGQEPLTASMLASAPPQEQKQMLGERLFPLIQAMHPTLAGKITGMLLEIDNSELLHMLESPESLRSKVDEAVAVLQAHQAKEAAQKAVNSATGVPTV.

Methionine 1 is modified (N-acetylmethionine). RRM domains lie at 11–89 (ASLY…WSQR), 99–175 (GNIF…RFKS), 191–268 (TNVY…RAQK), and 294–370 (VNLY…LAQR). Residues 166 to 289 (RKVFVGRFKS…FEQMKQDRIT (124 aa)) are CSDE1-binding. Position 299 is an N6-methyllysine (lysine 299). Serine 315 is modified (phosphoserine). Phosphothreonine is present on threonine 319. Omega-N-methylarginine is present on residues arginine 385, arginine 419, arginine 432, and arginine 436. Omega-N-methylated arginine; by CARM1 is present on residues arginine 455 and arginine 460. Residues arginine 475 and arginine 481 each carry the omega-N-methylarginine modification. Arginine 493 carries the asymmetric dimethylarginine; alternate modification. Arginine 493 carries the dimethylated arginine; alternate modification. An Omega-N-methylarginine; alternate modification is found at arginine 493. Arginine 506 carries the omega-N-methylarginine modification. Lysine 512 carries the post-translational modification N6-acetyllysine. The residue at position 518 (arginine 518) is an Omega-N-methylarginine. In terms of domain architecture, PABC spans 542-619 (QEPLTASMLA…AVAVLQAHQA (78 aa)).

Belongs to the polyadenylate-binding protein type-1 family. As to quaternary structure, may form homodimers. Component of a multisubunit autoregulatory ribonucleoprotein complex (ARC), at least composed of IGF2BP1, PABPC1 and CSDE1. Directly interacts with IGF2BP1. Part of a complex associated with the FOS mCRD domain and consisting of HNRPD, SYNCRIP, PAIP1 and CSDE1/UNR. Interacts with PAIP1 and PAIP2 (via the PABPC1-interacting motifs PAM1 and PAM2). Interacts with PAIP1 with a 1:1 stoichiometry and with PAIP2 with a 1:2 stoichiometry. The interaction with CSDE1 is direct and RNA-independent. Found in a mRNP complex with YBX2. Interacts with TENT2/GLD2. Identified in the spliceosome C complex. Identified in a mRNP complex, at least composed of DHX9, DDX3X, ELAVL1, HNRNPU, IGF2BP1, ILF3, PABPC1, PCBP2, PTBP2, STAU1, STAU2, SYNCRIP and YBX1. The interaction with DDX3X is direct and RNA-independent. This interaction increases in stressed cells and decreases during cell recovery. Identified in a IGF2BP1-dependent mRNP granule complex containing untranslated mRNAs. Interacts with NXF1/TAP. Interacts with PIWIL1. Interacts with AGO1, AGO2, GSPT1 and GSPT2. Interacts with LARP4B. Interacts (via the second and third RRM domains and the C-terminus) with PAIP2B (via central acidic portion and C-terminus). Forms a complex with LARP1 and SHFL. Interacts with LARP4. Interacts with ZFC3H1 in a RNase-sensitive manner. Interacts with TRIM71 (via NHL repeats) in an RNA-dependent manner. Interacts with TENT5C; the interaction has no effect on TENT5C poly(A) polymerase function. Interacts with G3BP1 and G3BP2. Interacts with ENDOV; the interaction is RNA-dependent and stimulates ENDOV activity. Interacts with UPF1; the interaction is RNA-dependent. Interacts with IGF2BP2 and IGF2BP3. May interact with SETX. Interacts with RBM46. Interacts with PAN3. Post-translationally, phosphorylated by MAPKAPK2. Methylated by CARM1. Arg-493 is dimethylated, probably to asymmetric dimethylarginine.

It localises to the cytoplasm. The protein localises to the stress granule. The protein resides in the nucleus. Its subcellular location is the cell projection. It is found in the lamellipodium. Its function is as follows. Binds the poly(A) tail of mRNA, including that of its own transcript, and regulates processes of mRNA metabolism such as pre-mRNA splicing and mRNA stability. Its function in translational initiation regulation can either be enhanced by PAIP1 or repressed by PAIP2. Can probably bind to cytoplasmic RNA sequences other than poly(A) in vivo. Binds to N6-methyladenosine (m6A)-containing mRNAs and contributes to MYC stability by binding to m6A-containing MYC mRNAs. Involved in translationally coupled mRNA turnover. Implicated with other RNA-binding proteins in the cytoplasmic deadenylation/translational and decay interplay of the FOS mRNA mediated by the major coding-region determinant of instability (mCRD) domain. Involved in regulation of nonsense-mediated decay (NMD) of mRNAs containing premature stop codons; for the recognition of premature termination codons (PTC) and initiation of NMD a competitive interaction between UPF1 and PABPC1 with the ribosome-bound release factors is proposed. By binding to long poly(A) tails, may protect them from uridylation by ZCCHC6/ZCCHC11 and hence contribute to mRNA stability. This Bos taurus (Bovine) protein is Polyadenylate-binding protein 1 (PABPC1).